A 508-amino-acid polypeptide reads, in one-letter code: Fasciclin-3 (508 aa).

Positions 1–20 are cleaved as a signal peptide; the sequence is MSRIVFICLAAILTDALTWA. Position 21 is a pyrrolidone carboxylic acid (Q21). Over 21–346 the chain is Extracellular; that stretch reads QVNVEPNTAL…SSKPPSSSLD (326 aa). Positions 44-106 constitute an Ig-like V-type domain; sequence GRSINYCRIE…NGQVKCSLGV (63 aa). 2 consecutive Ig-like C2-type domains span residues 126–223 and 236–310; these read PIIE…ESVP and APVH…GLTL. Cysteines 150 and 211 form a disulfide. N-linked (GlcNAc...) asparagine glycosylation is found at N160, N257, and N300. A helical transmembrane segment spans residues 347–370; the sequence is VAAIVGIVVAVAVLVLVVLLIVFA. Over 371-508 the chain is Cytoplasmic; the sequence is RATGRWCFGG…QSTSPVWTFK (138 aa). The segment at 381 to 439 is disordered; sequence KSIKTPTNETSDTESADIKATSTATATTTMGGVGVSAEEEETVNEQESPQEQQQQQQKK. Position 382 is a phosphoserine (S382). 2 stretches are compositionally biased toward low complexity: residues 400–409 and 425–437; these read ATSTATATTT and EQESPQEQQQQQQ. S459 carries the post-translational modification Phosphoserine.

As to expression, expressed on different subsets of axon bundles (fascicles) in insect embryos.

Its subcellular location is the membrane. Its function is as follows. Mediates cell adhesion in a Ca(2+)-independent manner. It plays a role in axon outgrowth, guidance and fasciculation of the developing nervous system. Function in neurons is essential for adult survival, and is important for climbing behavior and activity. This Drosophila melanogaster (Fruit fly) protein is Fasciclin-3 (Fas3).